The following is a 245-amino-acid chain: Phosphoribosylaminoimidazole-succinocarboxamide synthase (245 aa).

The protein belongs to the SAICAR synthetase family.

The catalysed reaction is 5-amino-1-(5-phospho-D-ribosyl)imidazole-4-carboxylate + L-aspartate + ATP = (2S)-2-[5-amino-1-(5-phospho-beta-D-ribosyl)imidazole-4-carboxamido]succinate + ADP + phosphate + 2 H(+). It functions in the pathway purine metabolism; IMP biosynthesis via de novo pathway; 5-amino-1-(5-phospho-D-ribosyl)imidazole-4-carboxamide from 5-amino-1-(5-phospho-D-ribosyl)imidazole-4-carboxylate: step 1/2. In Acaryochloris marina (strain MBIC 11017), this protein is Phosphoribosylaminoimidazole-succinocarboxamide synthase.